The primary structure comprises 443 residues: Thymidine phosphorylase (443 aa).

It belongs to the thymidine/pyrimidine-nucleoside phosphorylase family. Homodimer.

It catalyses the reaction thymidine + phosphate = 2-deoxy-alpha-D-ribose 1-phosphate + thymine. Its pathway is pyrimidine metabolism; dTMP biosynthesis via salvage pathway; dTMP from thymine: step 1/2. The enzymes which catalyze the reversible phosphorolysis of pyrimidine nucleosides are involved in the degradation of these compounds and in their utilization as carbon and energy sources, or in the rescue of pyrimidine bases for nucleotide synthesis. The protein is Thymidine phosphorylase of Photobacterium profundum (strain SS9).